Here is a 495-residue protein sequence, read N- to C-terminus: GTPase Der (495 aa).

2 EngA-type G domains span residues 3-166 (PVVA…VQDE) and 208-381 (IKLA…ACAT). Residues 9-16 (GRPNVGKS), 56-60 (DTGGI), 118-121 (NKTD), 214-221 (GRPNVGKS), 261-265 (DTAGV), and 326-329 (NKWD) each bind GTP. The KH-like domain occupies 382–466 (RRVSTAMLTR…PIRIQFKEGE (85 aa)).

This sequence belongs to the TRAFAC class TrmE-Era-EngA-EngB-Septin-like GTPase superfamily. EngA (Der) GTPase family. As to quaternary structure, associates with the 50S ribosomal subunit.

In terms of biological role, GTPase that plays an essential role in the late steps of ribosome biogenesis. This is GTPase Der from Pectobacterium carotovorum subsp. carotovorum (strain PC1).